The sequence spans 426 residues: Glutamate-1-semialdehyde 2,1-aminomutase (426 aa).

Position 265 is an N6-(pyridoxal phosphate)lysine (Lys265).

It belongs to the class-III pyridoxal-phosphate-dependent aminotransferase family. HemL subfamily. As to quaternary structure, homodimer. Pyridoxal 5'-phosphate is required as a cofactor.

The protein resides in the cytoplasm. The enzyme catalyses (S)-4-amino-5-oxopentanoate = 5-aminolevulinate. Its pathway is porphyrin-containing compound metabolism; protoporphyrin-IX biosynthesis; 5-aminolevulinate from L-glutamyl-tRNA(Glu): step 2/2. The protein is Glutamate-1-semialdehyde 2,1-aminomutase of Escherichia coli O157:H7.